The chain runs to 237 residues: Ribonuclease 3 (237 aa).

The 128-residue stretch at 6 to 133 (LIEVEKLIGI…VIAAVYLDKG (128 aa)) folds into the RNase III domain. Residue E46 participates in Mg(2+) binding. Residue D50 is part of the active site. Mg(2+)-binding residues include D119 and E122. Residue E122 is part of the active site. The DRBM domain maps to 160–229 (DFKTRLQEVL…AKAALQRLGE (70 aa)).

Belongs to the ribonuclease III family. As to quaternary structure, homodimer. The cofactor is Mg(2+).

The protein localises to the cytoplasm. The catalysed reaction is Endonucleolytic cleavage to 5'-phosphomonoester.. Digests double-stranded RNA. Involved in the processing of primary rRNA transcript to yield the immediate precursors to the large and small rRNAs (23S and 16S). Processes some mRNAs, and tRNAs when they are encoded in the rRNA operon. Processes pre-crRNA and tracrRNA of type II CRISPR loci if present in the organism. The sequence is that of Ribonuclease 3 from Clostridium perfringens (strain 13 / Type A).